Consider the following 246-residue polypeptide: Ribonuclease PH (246 aa).

Residues Arg91 and 129–131 (GTR) contribute to the phosphate site.

The protein belongs to the RNase PH family. In terms of assembly, homohexameric ring arranged as a trimer of dimers.

It carries out the reaction tRNA(n+1) + phosphate = tRNA(n) + a ribonucleoside 5'-diphosphate. Phosphorolytic 3'-5' exoribonuclease that plays an important role in tRNA 3'-end maturation. Removes nucleotide residues following the 3'-CCA terminus of tRNAs; can also add nucleotides to the ends of RNA molecules by using nucleoside diphosphates as substrates, but this may not be physiologically important. Probably plays a role in initiation of 16S rRNA degradation (leading to ribosome degradation) during starvation. The sequence is that of Ribonuclease PH from Paraburkholderia xenovorans (strain LB400).